A 450-amino-acid chain; its full sequence is Endosomal transmembrane epsin interactor 1 (450 aa).

A signal peptide spans Met1–Gly29. Residues Ala30–Lys85 are Lumenal-facing. Residues Val86–Ala106 form a helical membrane-spanning segment. Over Leu107–Leu450 the chain is Cytoplasmic. The mediates interaction with EPN1 stretch occupies residues Leu107 to Leu450. 2 consecutive short sequence motifs (PPxY; mediates interaction with ITCH) follow at residues Pro148 to Tyr151 and Pro194 to Tyr197. Residues Asp235–Glu284 are disordered. Polar residues predominate over residues Asn246 to Leu256. The segment covering Ser273–Glu284 has biased composition (basic and acidic residues). Residue Lys274 forms a Glycyl lysine isopeptide (Lys-Gly) (interchain with G-Cter in ubiquitin) linkage. Ser275 carries the post-translational modification Phosphoserine. Residues Lys329 and Lys365 each participate in a glycyl lysine isopeptide (Lys-Gly) (interchain with G-Cter in ubiquitin) cross-link.

It belongs to the ENTREP family. Interacts with ITCH; enhances the ubiquitination of CXCR4 by ITCH and the subsequent endocytosis and desensitization of the receptor. Interacts with EPN1. Post-translationally, monoubiquitinated at Lys-274, Lys-329 and Lys-365 by ITCH. Prominently expressed in muscle.

The protein resides in the early endosome membrane. Its subcellular location is the late endosome membrane. It localises to the recycling endosome membrane. The protein localises to the cell membrane. In terms of biological role, functions as an activator of the E3 ubiquitin protein ligase ITCH in the ubiquitination of the CXCL12-activated CXCR4 receptor. Thereby, triggers CXCR4 endocytosis and desensitization, negatively regulating the CXCL12/CXCR4 signaling pathway. The protein is Endosomal transmembrane epsin interactor 1 of Homo sapiens (Human).